The primary structure comprises 416 residues: MAGPFSRLLSARPGLRLLALAGAGSLAAGFLLRSEPVRAASERRRLYPPSAEYPDLRKHNNCMASHLTPAVYARLCDKTTPTGWTLDQCIQTGVDNPGHPFIKTVGMVAGDEETYEVFAELFDPVIQERHNGYDPRTMKHTTDLDASKIRSGYFDERYVLSSRVRTGRSIRGLSLPPACTRAERREVERVVVDALSGLKGDLAGRYYRLSEMTEAEQQQLIDDHFLFDKPVSPLLTAAGMARDWPDARGIWHNNEKSFLIWVNEEDHTRVISMEKGGNMKKVFERFCRGLKEVERLIQERGWEFMWNERLGYILTCPSNLGTGLRAGVHIKLPLLSKDSRFPKILENLRLQKRGTGGVDTAATGSVFDISNLDRLGKSEVELVQLVIDGVNFLIDCERRLERGQDIRIPPPLPNKH.

A mitochondrion-targeting transit peptide spans 1-39 (MAGPFSRLLSARPGLRLLALAGAGSLAAGFLLRSEPVRA). The interval 40–64 (ASERRRLYPPSAEYPDLRKHNNCMA) is cardiolipin-binding. Positions 45-131 (RLYPPSAEYP…FDPVIQERHN (87 aa)) constitute a Phosphagen kinase N-terminal domain. Ser151 bears the Phosphoserine mark. The Phosphagen kinase C-terminal domain maps to 158-400 (YVLSSRVRTG…NFLIDCERRL (243 aa)). ATP is bound at residue 161–165 (SSRVR). At Ser196 the chain carries Phosphoserine. Thr213 bears the Phosphothreonine mark. His224 is a binding site for ATP. The residue at position 232 (Ser232) is a Phosphoserine. ATP contacts are provided by residues Arg269, Arg325, and 353 to 358 (RGTGGV). Thr355 is subject to Phosphothreonine. Ser365 bears the Phosphoserine mark. Position 368 (Asp368) interacts with ATP.

It belongs to the ATP:guanido phosphotransferase family. Exists as an octamer composed of four MTCK homodimers.

The protein localises to the mitochondrion inner membrane. It catalyses the reaction creatine + ATP = N-phosphocreatine + ADP + H(+). Reversibly catalyzes the transfer of phosphate between ATP and various phosphogens (e.g. creatine phosphate). Creatine kinase isoenzymes play a central role in energy transduction in tissues with large, fluctuating energy demands, such as skeletal muscle, heart, brain and spermatozoa. This Bos taurus (Bovine) protein is Creatine kinase U-type, mitochondrial (CKMT1).